The chain runs to 40 residues: Subtilisin-like serine protease AS-E1 (40 aa).

The Peptidase S8 domain occupies 4-40; sequence PWGLARISHRTTGATSYVYDDSAGEGTCSYIIDTGIY. Residue Asp36 is the Charge relay system of the active site.

It belongs to the peptidase S8 family. As to quaternary structure, homodimer.

Its activity is regulated as follows. Strongly inhibited by antipain and PMSF. Inhibited by benzamidine and aprotinin by 80% and 17% respectively. Little or no inhibition by EDTA, E-64, iodoacetic acid, leupeptin and FUT-175. Its function is as follows. Subtilisin-like serine protease. Cleaves prothrombin at 155-Arg-|-Ser-156, 45-Thr-|-Ala-46 and 316-Tyr-|-Ile-317 to produce meizothrombin(desF1)-like molecules. Degrades fibrinogen. Inhibits plasma coagulation. The protein is Subtilisin-like serine protease AS-E1 of Acremonium sp.